The following is a 223-amino-acid chain: Deoxyribose-phosphate aldolase (223 aa).

The active-site Proton donor/acceptor is D91. K154 serves as the catalytic Schiff-base intermediate with acetaldehyde. K183 serves as the catalytic Proton donor/acceptor.

This sequence belongs to the DeoC/FbaB aldolase family. DeoC type 1 subfamily.

Its subcellular location is the cytoplasm. It carries out the reaction 2-deoxy-D-ribose 5-phosphate = D-glyceraldehyde 3-phosphate + acetaldehyde. It participates in carbohydrate degradation; 2-deoxy-D-ribose 1-phosphate degradation; D-glyceraldehyde 3-phosphate and acetaldehyde from 2-deoxy-alpha-D-ribose 1-phosphate: step 2/2. Functionally, catalyzes a reversible aldol reaction between acetaldehyde and D-glyceraldehyde 3-phosphate to generate 2-deoxy-D-ribose 5-phosphate. The protein is Deoxyribose-phosphate aldolase of Geobacillus thermodenitrificans (strain NG80-2).